Consider the following 125-residue polypeptide: uncharacterized protein (125 aa).

An N-terminal signal peptide occupies residues 1–21; it reads MIRNIIITISAILLLTSKGFA. Positions 54–102 form a coiled coil; the sequence is KPEIREEIQKYRVEIVNINKKKRELYDKLSKEAQNFLAKEQEYKQRLSS. Residues 96 to 125 form a disordered region; that stretch reads YKQRLSSSSMATEDSKDNNTAKDNKDADKK. A compositionally biased stretch (basic and acidic residues) spans 108 to 125; it reads EDSKDNNTAKDNKDADKK.

This is an uncharacterized protein from Rickettsia bellii (strain RML369-C).